The sequence spans 392 residues: Selenide, water dikinase 1 (392 aa).

The active site involves Cys-31. ATP-binding positions include Lys-32, 67–69 (GMD), Asp-87, Asp-110, and 161–164 (GGQT). Asp-69 serves as a coordination point for Mg(2+). Mg(2+) is bound at residue Asp-110. Residue Asp-265 participates in Mg(2+) binding.

The protein belongs to the selenophosphate synthase 1 family. Class II subfamily. Homodimer. Mg(2+) is required as a cofactor.

It localises to the cell membrane. The protein resides in the nucleus membrane. The enzyme catalyses hydrogenselenide + ATP + H2O = selenophosphate + AMP + phosphate + 2 H(+). Synthesizes selenophosphate from selenide and ATP. This Xenopus laevis (African clawed frog) protein is Selenide, water dikinase 1 (sephs1).